We begin with the raw amino-acid sequence, 341 residues long: Glyceraldehyde-3-phosphate dehydrogenase (341 aa).

Residues 11–12 and Gly109 each bind NAD(+); that span reads TI. Residue 138–140 participates in D-glyceraldehyde 3-phosphate binding; sequence SCN. Cys139 serves as the catalytic Nucleophile. Arg167 contacts NAD(+). Residues Thr169 and 192–193 each bind D-glyceraldehyde 3-phosphate; that span reads HA. Position 299 (Gln299) interacts with NAD(+).

The protein belongs to the glyceraldehyde-3-phosphate dehydrogenase family. In terms of assembly, homotetramer.

The protein resides in the cytoplasm. It carries out the reaction D-glyceraldehyde 3-phosphate + phosphate + NADP(+) = (2R)-3-phospho-glyceroyl phosphate + NADPH + H(+). The catalysed reaction is D-glyceraldehyde 3-phosphate + phosphate + NAD(+) = (2R)-3-phospho-glyceroyl phosphate + NADH + H(+). Its pathway is carbohydrate degradation; glycolysis; pyruvate from D-glyceraldehyde 3-phosphate: step 1/5. In Picrophilus torridus (strain ATCC 700027 / DSM 9790 / JCM 10055 / NBRC 100828 / KAW 2/3), this protein is Glyceraldehyde-3-phosphate dehydrogenase.